A 187-amino-acid chain; its full sequence is Virulence protein ATR13 (187 aa).

A signal peptide spans 1-19 (MRLVHAVLLPGIIVFVSNG). The short motif at 38–41 (RQLR) is the RxLR element. Residues 50 to 92 (LSRASFGLGKAQDPLDKFFRKIINSRKPIETSYSAKGIHEKII) are leucine heptad repeat region. Tandem repeats lie at residues 93-103 (KAYDRHVFESK), 104-114 (KAHDRHVSKSK), 115-125 (KAHGRHVSKSK), and 126-136 (MAHDRHVSKSE). Positions 93 to 136 (KAYDRHVFESKKAHDRHVSKSKKAHGRHVSKSKMAHDRHVSKSE) are 4 X 11 AA tandem repeats. Positions 104–136 (KAHDRHVSKSKKAHGRHVSKSKMAHDRHVSKSE) are disordered. The span at 111–125 (SKSKKAHGRHVSKSK) shows a compositional bias: basic residues. Residues 126-136 (MAHDRHVSKSE) are compositionally biased toward basic and acidic residues. Residues 137–187 (KAPIQYASVADYLKKIYPGTDIERIVSTLKRHDEVGAKDLGAKLQTAVASQ) form a highly variable C-terminus domain region.

The protein belongs to the RxLR effector family.

Its subcellular location is the secreted. The protein localises to the host nucleus. The protein resides in the host nucleolus. It is found in the host cytoplasm. Its function is as follows. Secreted effector that acts as an elicitor of hypersensitive response (HR) specifically on plants carrying defense protein RPP13. Recognition of ATR13 by RPP13 initiates defense responses that are effective against oomycete, bacterial and viral pathogens. Due to high polymorphism, ATR13-Emoy2 does not recognize RPP13-Nd, the RPP13 defense protein from Arabidopsis thaliana ecotype Niederzenz. ATR13-Emoy2 is recognized by RPP13 variants RPP13-UKID44, RPP13-UKID65 and RPP13-UKID71. This Hyaloperonospora arabidopsidis (strain Emoy2) (Downy mildew agent) protein is Virulence protein ATR13.